The sequence spans 551 residues: Arginine--tRNA ligase (551 aa).

The short motif at 124-134 (ANPTGPLHIGH) is the 'HIGH' region element.

Belongs to the class-I aminoacyl-tRNA synthetase family. Monomer.

The protein resides in the cytoplasm. The catalysed reaction is tRNA(Arg) + L-arginine + ATP = L-arginyl-tRNA(Arg) + AMP + diphosphate. This is Arginine--tRNA ligase from Solidesulfovibrio magneticus (strain ATCC 700980 / DSM 13731 / RS-1) (Desulfovibrio magneticus).